The sequence spans 244 residues: Methylthioribulose-1-phosphate dehydratase (244 aa).

Cysteine 104 serves as a coordination point for substrate. Zn(2+) contacts are provided by histidine 122 and histidine 124. Catalysis depends on glutamate 148, which acts as the Proton donor/acceptor. Histidine 204 provides a ligand contact to Zn(2+).

The protein belongs to the aldolase class II family. MtnB subfamily. Zn(2+) serves as cofactor.

It is found in the cytoplasm. The enzyme catalyses 5-(methylsulfanyl)-D-ribulose 1-phosphate = 5-methylsulfanyl-2,3-dioxopentyl phosphate + H2O. The protein operates within amino-acid biosynthesis; L-methionine biosynthesis via salvage pathway; L-methionine from S-methyl-5-thio-alpha-D-ribose 1-phosphate: step 2/6. Catalyzes the dehydration of methylthioribulose-1-phosphate (MTRu-1-P) into 2,3-diketo-5-methylthiopentyl-1-phosphate (DK-MTP-1-P). This chain is Methylthioribulose-1-phosphate dehydratase, found in Cryptococcus neoformans var. neoformans serotype D (strain B-3501A) (Filobasidiella neoformans).